Here is a 189-residue protein sequence, read N- to C-terminus: dCTP deaminase (189 aa).

Residues 112–117 (KSTYAR), 136–138 (TLE), Q157, Y171, and Q181 each bind dCTP. E138 serves as the catalytic Proton donor/acceptor.

The protein belongs to the dCTP deaminase family. In terms of assembly, homotrimer.

It catalyses the reaction dCTP + H2O + H(+) = dUTP + NH4(+). Its pathway is pyrimidine metabolism; dUMP biosynthesis; dUMP from dCTP (dUTP route): step 1/2. In terms of biological role, catalyzes the deamination of dCTP to dUTP. The polypeptide is dCTP deaminase (Burkholderia orbicola (strain MC0-3)).